Reading from the N-terminus, the 1043-residue chain is Calcium-transporting ATPase 1, plasma membrane-type (1043 aa).

Residues 1–178 are Cytoplasmic-facing; the sequence is MSFIRKKSME…FLWDASQDMT (178 aa). 2 consecutive transmembrane segments (helical) span residues 179–199 and 202–222; these read LLLL…TEGW and GMYD…ITAA. At 223-258 the chain is on the cytoplasmic side; that stretch reads SDYKQSLQFRDLDKEKKKIDVQVTRDGYRQKVSIYD. 2 helical membrane passes run 259 to 279 and 356 to 376; these read IVVG…DGLF and VATI…TVLM. The Cytoplasmic portion of the chain corresponds to 377–395; it reads ARFLLGKAGAPGGLLRWRM. A helical transmembrane segment spans residues 396–416; that stretch reads VDALAVLNFFAVAVTIIVVAV. Asp-460 functions as the 4-aspartylphosphate intermediate in the catalytic mechanism. Mg(2+)-binding residues include Asp-761 and Asp-765. Residues 824–844 form a helical membrane-spanning segment; that stretch reads LTVNVVALMVNFISASFTGSA. Position 845 (Pro-845) is a topological domain, cytoplasmic. Helical transmembrane passes span 846-866 and 891-911; these read LTIV…ALAL and VMWR…GVLL. The Cytoplasmic segment spans residues 912-955; it reads LRGKSLLQINGPQADSLLNTFVFNTFVFCQVFNEVNSREMEKIN. The next 2 membrane-spanning stretches (helical) occupy residues 956-976 and 998-1018; these read VFSG…TAGF and WLTS…LKCI. The Cytoplasmic segment spans residues 1019 to 1043; it reads PVESGSDASDRHDGYRPIPTGPSAV. Residues 1023–1043 are disordered; sequence GSDASDRHDGYRPIPTGPSAV.

Belongs to the cation transport ATPase (P-type) (TC 3.A.3) family. Type IIB subfamily.

The protein resides in the membrane. The catalysed reaction is Ca(2+)(in) + ATP + H2O = Ca(2+)(out) + ADP + phosphate + H(+). With respect to regulation, activated by calmodulin. This magnesium-dependent enzyme catalyzes the hydrolysis of ATP coupled with the translocation of calcium from the cytosol out of the cell, into the endoplasmic reticulum, or into organelles. The chain is Calcium-transporting ATPase 1, plasma membrane-type from Oryza sativa subsp. japonica (Rice).